A 540-amino-acid chain; its full sequence is Tyrosine-protein kinase transforming protein erbB (540 aa).

The 268-residue stretch at 132 to 399 (FKKVKVLGFG…KMARDPPRYL (268 aa)) folds into the Protein kinase domain. ATP-binding positions include 138–146 (LGFGAFGTV) and lysine 165. Aspartate 257 functions as the Proton acceptor in the catalytic mechanism.

It belongs to the protein kinase superfamily. Tyr protein kinase family. EGF receptor subfamily.

It carries out the reaction L-tyrosyl-[protein] + ATP = O-phospho-L-tyrosyl-[protein] + ADP + H(+). This chain is Tyrosine-protein kinase transforming protein erbB (V-ERBB), found in Avian erythroblastosis virus (strain ts167).